We begin with the raw amino-acid sequence, 196 residues long: Spore maturation protein A (196 aa).

The next 4 helical transmembrane spans lie at 1–21, 37–57, 133–153, and 163–183; these read MVNI…MCNG, AITI…LMKI, ITFL…VIAV, and TDIV…AIII.

It localises to the cell membrane. Its function is as follows. Involved in spore core dehydration; might be involved in the transport of something into or out of the forespore or could be required for some modification of the cortex peptidoglycan structure. The sequence is that of Spore maturation protein A (spmA) from Bacillus subtilis (strain 168).